Reading from the N-terminus, the 395-residue chain is MAWRHLKKRAQDAVIILGGGGLLFASYLMATGDERFYAEHLMPTLQGLLDPESAHRLAVRFTSLGLLPRARFQDSDMLEVRVLGHKFRNPVGIAAGFDKHGEAVDGLYKMGFGFVEIGSVTPKPQEGNPRPRVFRLPEDQAVINRYGFNSHGLSVVEHRLRARQQKQAKLTEDGLPLGVNLGKNKTSVDAAEDYAEGVRVLGPLADYLVVNVSSPNTAGLRSLQGKAELRRLLTKVLQERDGLRRVHRPAVLVKIAPDLTSQDKEDIASVVKELGIDGLIVTNTTVSRPAGLQGALRSETGGLSGKPLRDLSTQTIREMYALTQGRVPIIGVGGVSSGQDALEKIRAGASLVQLYTALTFWGPPVVGKVKRELEALLKEQGFGGVTDAIGADHRR.

Residues 1–10 (MAWRHLKKRA) constitute a mitochondrion; not cleaved transit peptide. Topologically, residues 1-10 (MAWRHLKKRA) are mitochondrial matrix. A helical transmembrane segment spans residues 11–30 (QDAVIILGGGGLLFASYLMA). The Mitochondrial intermembrane segment spans residues 31-395 (TGDERFYAEH…TDAIGADHRR (365 aa)). FMN is bound by residues 95–99 (AGFDK) and S119. Position 99 (K99) interacts with substrate. A substrate-binding site is contributed by 144-148 (NRYGF). FMN-binding residues include N180 and N211. 211 to 216 (NVSSPN) provides a ligand contact to substrate. The Nucleophile role is filled by S214. FMN contacts are provided by K254 and T282. 283 to 284 (NT) lines the substrate pocket. FMN-binding positions include G305, G334, and 355–356 (YT).

It belongs to the dihydroorotate dehydrogenase family. Type 2 subfamily. In terms of assembly, monomer. FMN serves as cofactor. In terms of processing, the uncleaved transit peptide is required for mitochondrial targeting and proper membrane integration.

It is found in the mitochondrion inner membrane. The catalysed reaction is (S)-dihydroorotate + a quinone = orotate + a quinol. It functions in the pathway pyrimidine metabolism; UMP biosynthesis via de novo pathway; orotate from (S)-dihydroorotate (quinone route): step 1/1. Catalyzes the conversion of dihydroorotate to orotate with quinone as electron acceptor. Required for UMP biosynthesis via de novo pathway. This is Dihydroorotate dehydrogenase (quinone), mitochondrial (DHODH) from Homo sapiens (Human).